Consider the following 218-residue polypeptide: tRNA (guanine-N(7)-)-methyltransferase (218 aa).

Residues glutamate 43, aspartate 68, glutamate 101, and asparagine 124 each contribute to the S-adenosyl-L-methionine site. Positions 128 and 160 each coordinate substrate.

It belongs to the class I-like SAM-binding methyltransferase superfamily. TrmB family.

It catalyses the reaction guanosine(46) in tRNA + S-adenosyl-L-methionine = N(7)-methylguanosine(46) in tRNA + S-adenosyl-L-homocysteine. It functions in the pathway tRNA modification; N(7)-methylguanine-tRNA biosynthesis. Catalyzes the formation of N(7)-methylguanine at position 46 (m7G46) in tRNA. The protein is tRNA (guanine-N(7)-)-methyltransferase of Acetivibrio thermocellus (strain ATCC 27405 / DSM 1237 / JCM 9322 / NBRC 103400 / NCIMB 10682 / NRRL B-4536 / VPI 7372) (Clostridium thermocellum).